The chain runs to 194 residues: Factor in the germline alpha (194 aa).

A bHLH domain is found at 59 to 111 (ERRRVANAKERERIKNLNRGFAKLKALVPFLPQSRKPSKVDILKGATEYIQIL). A compositionally biased stretch (basic and acidic residues) spans 121–137 (SEKQSPEEQTHSGRPSD). A disordered region spans residues 121–163 (SEKQSPEEQTHSGRPSDPHVSSTRELLGNATQPTSCASGLKKE). Residues 139-157 (HVSSTRELLGNATQPTSCA) show a composition bias toward polar residues.

As to quaternary structure, heterodimer with TCF3/isoform E12. In terms of tissue distribution, expressed only in the oocytes within the ovary and at lower level in the testis. Found in the resting oocytes of the primordial follicle cells, at the periphery of the ovary and in the hilar region. Also detected in growing oocytes, but at lower levels.

The protein resides in the nucleus. Germ-line specific transcription factor implicated in postnatal oocyte-specific gene expression. Plays a key regulatory role in the expression of multiple oocyte-specific genes, including those that initiate folliculogenesis and those that encode the zona pellucida (ZP1, ZP2 and ZP3) required for fertilization and early embryonic survival. Essential for oocytes to survive and form primordial follicles. The persistence of FIGLA in adult females suggests that it may regulate additional pathways that are essential for normal ovarian development. Binds to the E-box (5'-CANNTG-3') of the ZPs (ZP1, ZP2, ZP3) promoters. In Mus musculus (Mouse), this protein is Factor in the germline alpha (Figla).